A 457-amino-acid chain; its full sequence is ATP synthase subunit beta (457 aa).

147–154 contributes to the ATP binding site; sequence GGAGVGKT.

This sequence belongs to the ATPase alpha/beta chains family. F-type ATPases have 2 components, CF(1) - the catalytic core - and CF(0) - the membrane proton channel. CF(1) has five subunits: alpha(3), beta(3), gamma(1), delta(1), epsilon(1). CF(0) has three main subunits: a(1), b(2) and c(9-12). The alpha and beta chains form an alternating ring which encloses part of the gamma chain. CF(1) is attached to CF(0) by a central stalk formed by the gamma and epsilon chains, while a peripheral stalk is formed by the delta and b chains.

The protein localises to the cell inner membrane. It carries out the reaction ATP + H2O + 4 H(+)(in) = ADP + phosphate + 5 H(+)(out). Produces ATP from ADP in the presence of a proton gradient across the membrane. The catalytic sites are hosted primarily by the beta subunits. The chain is ATP synthase subunit beta from Actinobacillus pleuropneumoniae serotype 3 (strain JL03).